The following is a 524-amino-acid chain: Bifunctional purine biosynthesis protein PurH (524 aa).

Positions 1-145 (MIQQALLSVS…KNHRDVTVIV (145 aa)) constitute an MGS-like domain.

It belongs to the PurH family.

It carries out the reaction (6R)-10-formyltetrahydrofolate + 5-amino-1-(5-phospho-beta-D-ribosyl)imidazole-4-carboxamide = 5-formamido-1-(5-phospho-D-ribosyl)imidazole-4-carboxamide + (6S)-5,6,7,8-tetrahydrofolate. It catalyses the reaction IMP + H2O = 5-formamido-1-(5-phospho-D-ribosyl)imidazole-4-carboxamide. Its pathway is purine metabolism; IMP biosynthesis via de novo pathway; 5-formamido-1-(5-phospho-D-ribosyl)imidazole-4-carboxamide from 5-amino-1-(5-phospho-D-ribosyl)imidazole-4-carboxamide (10-formyl THF route): step 1/1. It functions in the pathway purine metabolism; IMP biosynthesis via de novo pathway; IMP from 5-formamido-1-(5-phospho-D-ribosyl)imidazole-4-carboxamide: step 1/1. In Ralstonia pickettii (strain 12J), this protein is Bifunctional purine biosynthesis protein PurH.